The following is a 1197-amino-acid chain: DNA-directed RNA polymerase subunit beta (1197 aa).

Residues 581-597 are compositionally biased toward polar residues; the sequence is QANSPLNDDGSFTNPTV. Disordered stretches follow at residues 581–603 and 1172–1197; these read QANS…RHGD and EKPD…EENV.

Belongs to the RNA polymerase beta chain family. In terms of assembly, the RNAP catalytic core consists of 2 alpha, 1 beta, 1 beta' and 1 omega subunit. When a sigma factor is associated with the core the holoenzyme is formed, which can initiate transcription.

The enzyme catalyses RNA(n) + a ribonucleoside 5'-triphosphate = RNA(n+1) + diphosphate. DNA-dependent RNA polymerase catalyzes the transcription of DNA into RNA using the four ribonucleoside triphosphates as substrates. The protein is DNA-directed RNA polymerase subunit beta of Oenococcus oeni (strain ATCC BAA-331 / PSU-1).